The sequence spans 479 residues: Glycerol kinase 5 (479 aa).

Residues S20 and S21 each coordinate ATP. Glycerol contacts are provided by R90, D267, and Q268. ATP contacts are provided by T289, G332, and G432.

It belongs to the FGGY kinase family.

Its subcellular location is the cytoplasm. The enzyme catalyses glycerol + ATP = sn-glycerol 3-phosphate + ADP + H(+). Its pathway is polyol metabolism; glycerol degradation via glycerol kinase pathway; sn-glycerol 3-phosphate from glycerol: step 1/1. In terms of biological role, skin-specific kinase that plays a key role in glycerol metabolism, catalyzing its phosphorylation to produce sn-glycerol 3-phosphate. Involved in skin-specific regulation of sterol regulatory element-binding protein (SREBP) processing and lipid biosynthesis. This Xenopus laevis (African clawed frog) protein is Glycerol kinase 5 (gk5).